The following is a 199-amino-acid chain: Ribonuclease HII (199 aa).

An RNase H type-2 domain is found at 12-199 (DLLAGTDEAG…FGPVKKILEG (188 aa)). A divalent metal cation is bound by residues Asp-18, Glu-19, and Asp-110.

The protein belongs to the RNase HII family. Mn(2+) is required as a cofactor. It depends on Mg(2+) as a cofactor.

It localises to the cytoplasm. The catalysed reaction is Endonucleolytic cleavage to 5'-phosphomonoester.. Endonuclease that specifically degrades the RNA of RNA-DNA hybrids. The chain is Ribonuclease HII from Marinomonas sp. (strain MWYL1).